Reading from the N-terminus, the 267-residue chain is Thiamine thiazole synthase (267 aa).

Residues S41, 60 to 61 (ER), G68, V132, and 160 to 162 (HVD) contribute to the NAD(+) site. 2 residues coordinate Fe cation: D162 and H177. An NAD(+)-binding site is contributed by M227. R237 provides a ligand contact to glycine.

This sequence belongs to the THI4 family. Homooctamer; tetramer of dimers. It depends on Fe(2+) as a cofactor.

The catalysed reaction is hydrogen sulfide + glycine + NAD(+) = ADP-5-ethyl-4-methylthiazole-2-carboxylate + nicotinamide + 3 H2O + H(+). The protein operates within cofactor biosynthesis; thiamine diphosphate biosynthesis. Involved in the biosynthesis of the thiazole moiety of thiamine. Catalyzes the conversion of NAD and glycine to adenosine diphosphate 5-(2-hydroxyethyl)-4-methylthiazole-2-carboxylate (ADT), an adenylated thiazole intermediate, using free sulfide as a source of sulfur. This Saccharolobus islandicus (strain L.S.2.15 / Lassen #1) (Sulfolobus islandicus) protein is Thiamine thiazole synthase.